Consider the following 106-residue polypeptide: Small cardioactive peptide-related peptide (106 aa).

The signal sequence occupies residues 1 to 20 (MFCKHLSFVAITICFLLVLA). The propeptide at 21–41 (KTENEIQQKNIKFDQRTWRNM) is amino-terminal spacer peptide. Gln-52 carries the glutamine amide modification. Positions 55-106 (SDNQPDYTCCGMPLTKYVGICPIGMECCPGLKKVLQKSGQRTIYSVCVADAY) are cleaved as a propeptide — carboxy-terminal spacer peptide.

Expression is seen in the peripheral and central nervous systems in tissues such as the brain, the inferior buccal ganglion, the gastric ganglion, the olfactory lobe, the peduncle lobe and the optic lobe. Expression in the brain is distributed in the median inferior frontal lobe, the superior buccal lobe, the prebranchial lobe and the pedal lobe. Not expressed in the vasomotor lobe or the palliovisceral lobe that controls the cardiac system.

It localises to the secreted. Its function is as follows. Evokes contractions in the radula protractor muscle, and may regulate feeding behavior and gut motility by controlling muscle contraction of the buccal mass. The chain is Small cardioactive peptide-related peptide from Octopus vulgaris (Common octopus).